The primary structure comprises 335 residues: DNA-directed RNA polymerase subunit alpha (335 aa).

Residues M1–E233 form an alpha N-terminal domain (alpha-NTD) region. The alpha C-terminal domain (alpha-CTD) stretch occupies residues V247–R335.

It belongs to the RNA polymerase alpha chain family. As to quaternary structure, homodimer. The RNAP catalytic core consists of 2 alpha, 1 beta, 1 beta' and 1 omega subunit. When a sigma factor is associated with the core the holoenzyme is formed, which can initiate transcription.

It catalyses the reaction RNA(n) + a ribonucleoside 5'-triphosphate = RNA(n+1) + diphosphate. In terms of biological role, DNA-dependent RNA polymerase catalyzes the transcription of DNA into RNA using the four ribonucleoside triphosphates as substrates. The chain is DNA-directed RNA polymerase subunit alpha from Psychrobacter sp. (strain PRwf-1).